A 738-amino-acid polypeptide reads, in one-letter code: Melanotransferrin (738 aa).

Residues 1 to 19 (MRGPSGALWLLLALRTVLG) form the signal peptide. An antigenic epitope region spans residues 20–30 (GMEVRWCATSD). Transferrin-like domains are found at residues 23–357 (VRWC…GLLC) and 366–706 (LRWC…GMSS). Cystine bridges form between C26-C63 and C36-C54. Residue N38 is glycosylated (N-linked (GlcNAc...) asparagine). Fe(3+) contacts are provided by D78 and Y107. 4 disulfide bridges follow: C130/C216, C172/C189, C186/C199, and C257/C271. T132 provides a ligand contact to hydrogencarbonate. A glycan (N-linked (GlcNAc...) asparagine) is linked at N135. Residues R136, V138, and G139 each coordinate hydrogencarbonate. Y210 is a binding site for Fe(3+). Fe(3+) contacts are provided by H279, S421, and Y451. The residue at position 462 (S462) is a Phosphoserine; by FAM20C. N515 is a glycosylation site (N-linked (GlcNAc...) asparagine). Y556 and H625 together coordinate Fe(3+). C709 carries the GPI-anchor amidated cysteine lipid modification. A propeptide spans 710–738 (SGAAAPAPGAPLLPLLLPALAARLLPPAL) (removed in mature form).

This sequence belongs to the transferrin family. In terms of tissue distribution, found predominantly in human melanomas and in certain fetal tissues; also found in liver, epithelium, umbilical chord, placenta and sweat gland ducts.

It localises to the cell membrane. Involved in iron cellular uptake. Seems to be internalized and then recycled back to the cell membrane. Binds a single atom of iron per subunit. Could also bind zinc. This is Melanotransferrin from Homo sapiens (Human).